Here is a 358-residue protein sequence, read N- to C-terminus: Dual-specificity RNA methyltransferase RlmN (358 aa).

Catalysis depends on E86, which acts as the Proton acceptor. The region spanning 105–338 (RHKRYTICVS…CTIRQSKGLD (234 aa)) is the Radical SAM core domain. Cysteines 112 and 343 form a disulfide. [4Fe-4S] cluster is bound by residues C119, C123, and C126. S-adenosyl-L-methionine contacts are provided by residues 169-170 (GE), S201, 224-226 (SLH), and N300. C343 serves as the catalytic S-methylcysteine intermediate.

It belongs to the radical SAM superfamily. RlmN family. The cofactor is [4Fe-4S] cluster.

The protein localises to the cytoplasm. It catalyses the reaction adenosine(2503) in 23S rRNA + 2 reduced [2Fe-2S]-[ferredoxin] + 2 S-adenosyl-L-methionine = 2-methyladenosine(2503) in 23S rRNA + 5'-deoxyadenosine + L-methionine + 2 oxidized [2Fe-2S]-[ferredoxin] + S-adenosyl-L-homocysteine. The catalysed reaction is adenosine(37) in tRNA + 2 reduced [2Fe-2S]-[ferredoxin] + 2 S-adenosyl-L-methionine = 2-methyladenosine(37) in tRNA + 5'-deoxyadenosine + L-methionine + 2 oxidized [2Fe-2S]-[ferredoxin] + S-adenosyl-L-homocysteine. In terms of biological role, specifically methylates position 2 of adenine 2503 in 23S rRNA and position 2 of adenine 37 in tRNAs. m2A2503 modification seems to play a crucial role in the proofreading step occurring at the peptidyl transferase center and thus would serve to optimize ribosomal fidelity. The sequence is that of Dual-specificity RNA methyltransferase RlmN from Campylobacter hominis (strain ATCC BAA-381 / DSM 21671 / CCUG 45161 / LMG 19568 / NCTC 13146 / CH001A).